The primary structure comprises 298 residues: Lipoyl synthase (298 aa).

7 residues coordinate [4Fe-4S] cluster: Cys-37, Cys-42, Cys-48, Cys-63, Cys-67, Cys-70, and Ser-277. The Radical SAM core domain occupies 49–266 (WGGGTATVML…KTLAESYGFL (218 aa)).

Belongs to the radical SAM superfamily. Lipoyl synthase family. It depends on [4Fe-4S] cluster as a cofactor.

It is found in the cytoplasm. The catalysed reaction is [[Fe-S] cluster scaffold protein carrying a second [4Fe-4S](2+) cluster] + N(6)-octanoyl-L-lysyl-[protein] + 2 oxidized [2Fe-2S]-[ferredoxin] + 2 S-adenosyl-L-methionine + 4 H(+) = [[Fe-S] cluster scaffold protein] + N(6)-[(R)-dihydrolipoyl]-L-lysyl-[protein] + 4 Fe(3+) + 2 hydrogen sulfide + 2 5'-deoxyadenosine + 2 L-methionine + 2 reduced [2Fe-2S]-[ferredoxin]. It participates in protein modification; protein lipoylation via endogenous pathway; protein N(6)-(lipoyl)lysine from octanoyl-[acyl-carrier-protein]: step 2/2. Its function is as follows. Catalyzes the radical-mediated insertion of two sulfur atoms into the C-6 and C-8 positions of the octanoyl moiety bound to the lipoyl domains of lipoate-dependent enzymes, thereby converting the octanoylated domains into lipoylated derivatives. This Myxococcus xanthus (strain DK1622) protein is Lipoyl synthase.